A 267-amino-acid polypeptide reads, in one-letter code: Apolipoprotein A-I (267 aa).

The signal sequence occupies residues 1–18 (MKAAVLTLAVLFLTGSQA). 2 repeat units span residues 68–89 (LKLL…EQLG) and 90–111 (PVTQ…QEMS). Positions 68-267 (LKLLDNWDSV…EEYTKKLNTQ (200 aa)) are 10 X approximate tandem repeats. Residue Met-110 is modified to Methionine sulfoxide. The stretch at 112–122 (KDLEEVKAKVQ) is one 3; half-length repeat. 5 repeat units span residues 123 to 144 (PYLD…QKVE), 145 to 166 (PLRA…EKLS), 167 to 188 (PLGE…THLA), 189 to 210 (PYSD…ENGG), and 211 to 232 (ARLA…EKAK). Position 136 is a methionine sulfoxide (Met-136). Residues 233–243 (PALEDLRQGLL) form a 9; half-length repeat. Copy 10 of the repeat occupies 244 to 267 (PVLESFKVSFLSALEEYTKKLNTQ).

This sequence belongs to the apolipoprotein A1/A4/E family. As to quaternary structure, homodimer. Interacts with APOA1BP and CLU. Component of a sperm activating protein complex (SPAP), consisting of APOA1, an immunoglobulin heavy chain, an immunoglobulin light chain and albumin. Interacts with NDRG1. Interacts with SCGB3A2. Interacts with NAXE and YJEFN3. In terms of processing, glycosylated. Palmitoylated. Post-translationally, phosphorylation sites are present in the extracellular medium. In terms of tissue distribution, major protein of plasma HDL, also found in chylomicrons.

It localises to the secreted. Participates in the reverse transport of cholesterol from tissues to the liver for excretion by promoting cholesterol efflux from tissues and by acting as a cofactor for the lecithin cholesterol acyltransferase (LCAT). As part of the SPAP complex, activates spermatozoa motility. This chain is Apolipoprotein A-I (APOA1), found in Pan troglodytes (Chimpanzee).